We begin with the raw amino-acid sequence, 536 residues long: Testis-specific expressed protein 55 (536 aa).

A compositionally biased stretch (low complexity) spans 1–11 (MEEPPQEALAE). Disordered regions lie at residues 1 to 287 (MEEP…PGTS) and 328 to 348 (SNADQPPVDNAHYTESDQTDH). The span at 35–52 (QKNQAERKADNHTAHRIA) shows a compositional bias: basic and acidic residues. Composition is skewed to polar residues over residues 62–85 (QAESSIFSQATNGVAEQNGHSTPG) and 105–136 (QVNQTPSEQTKGKASSQANNVQHEQSDGQVSG). Composition is skewed to basic and acidic residues over residues 138-158 (TEERTAEQTERRLPTQAERRT) and 173-222 (RGSR…ERRP). A compositionally biased stretch (low complexity) spans 226 to 242 (IDSGSSVPSDQSPSVQI). Residues 243-255 (DSGSSVPSDQRPS) are compositionally biased toward polar residues. Residues 339 to 348 (HYTESDQTDH) show a composition bias toward basic and acidic residues.

As to expression, testis-specific.

The protein resides in the nucleus. It is found in the cell projection. Its subcellular location is the cilium. It localises to the flagellum. This Homo sapiens (Human) protein is Testis-specific expressed protein 55.